A 617-amino-acid chain; its full sequence is Proline--tRNA ligase (617 aa).

Belongs to the class-II aminoacyl-tRNA synthetase family. ProS type 1 subfamily. In terms of assembly, homodimer.

The protein resides in the cytoplasm. It carries out the reaction tRNA(Pro) + L-proline + ATP = L-prolyl-tRNA(Pro) + AMP + diphosphate. Functionally, catalyzes the attachment of proline to tRNA(Pro) in a two-step reaction: proline is first activated by ATP to form Pro-AMP and then transferred to the acceptor end of tRNA(Pro). As ProRS can inadvertently accommodate and process non-cognate amino acids such as alanine and cysteine, to avoid such errors it has two additional distinct editing activities against alanine. One activity is designated as 'pretransfer' editing and involves the tRNA(Pro)-independent hydrolysis of activated Ala-AMP. The other activity is designated 'posttransfer' editing and involves deacylation of mischarged Ala-tRNA(Pro). The misacylated Cys-tRNA(Pro) is not edited by ProRS. The protein is Proline--tRNA ligase of Streptococcus pneumoniae (strain P1031).